The sequence spans 259 residues: UPF0246 protein PBPRA0561 (259 aa).

Belongs to the UPF0246 family.

This chain is UPF0246 protein PBPRA0561, found in Photobacterium profundum (strain SS9).